Reading from the N-terminus, the 445-residue chain is Polyadenylate-binding protein RBP47A (445 aa).

Polar residues predominate over residues 1-12 (MQTPNNNGSTDS). Disordered stretches follow at residues 1–45 (MQTP…WQQQ) and 93–117 (AAYQ…GGDD). The segment covering 22-35 (TPPPPLQQSTPPPQ) has biased composition (pro residues). Composition is skewed to low complexity over residues 36–45 (QQQQQQWQQQ) and 93–108 (AAYQ…SQQQ). RRM domains follow at residues 119-199 (KTLW…WASF), 213-292 (LSIF…IATP), and 327-399 (STIF…WGRS).

Belongs to the polyadenylate-binding RBP47 family. As to quaternary structure, interacts with the poly(A) tail of mRNA in nucleus. As to expression, expressed in leaves, stems, flowers, and seedlings.

The protein resides in the nucleus. Its subcellular location is the cytoplasmic granule. Its function is as follows. Heterogeneous nuclear ribonucleoprotein (hnRNP)-protein binding the poly(A) tail of mRNA and probably involved in some steps of pre-mRNA maturation. This is Polyadenylate-binding protein RBP47A (RBP47A) from Arabidopsis thaliana (Mouse-ear cress).